Here is a 795-residue protein sequence, read N- to C-terminus: Phenylalanine--tRNA ligase beta subunit (795 aa).

Residues 39 to 148 (AGEFNGVVVG…ADAPVGKDFR (110 aa)) form the tRNA-binding domain. The B5 domain occupies 401–476 (PKLNKVQLRR…RIYGYNSIPN (76 aa)). Mg(2+)-binding residues include Asp-454, Asp-460, Glu-463, and Glu-464. In terms of domain architecture, FDX-ACB spans 701–794 (SKFPANKRDL…LKDRFNAYLR (94 aa)).

The protein belongs to the phenylalanyl-tRNA synthetase beta subunit family. Type 1 subfamily. As to quaternary structure, tetramer of two alpha and two beta subunits. It depends on Mg(2+) as a cofactor.

The protein localises to the cytoplasm. The enzyme catalyses tRNA(Phe) + L-phenylalanine + ATP = L-phenylalanyl-tRNA(Phe) + AMP + diphosphate + H(+). This Mannheimia succiniciproducens (strain KCTC 0769BP / MBEL55E) protein is Phenylalanine--tRNA ligase beta subunit.